The primary structure comprises 108 residues: Nucleoid-associated protein Rmet_2128 (108 aa).

The segment covering 86–96 (TTQEKMGSMTS) has biased composition (polar residues). The interval 86 to 108 (TTQEKMGSMTSGLPLPPGFKLPF) is disordered. Positions 99–108 (PLPPGFKLPF) are enriched in pro residues.

Belongs to the YbaB/EbfC family. In terms of assembly, homodimer.

It is found in the cytoplasm. It localises to the nucleoid. Its function is as follows. Binds to DNA and alters its conformation. May be involved in regulation of gene expression, nucleoid organization and DNA protection. The sequence is that of Nucleoid-associated protein Rmet_2128 from Cupriavidus metallidurans (strain ATCC 43123 / DSM 2839 / NBRC 102507 / CH34) (Ralstonia metallidurans).